The sequence spans 510 residues: Propionyl-CoA carboxylase beta chain (510 aa).

In terms of domain architecture, CoA carboxyltransferase N-terminal spans 1–257 (MKDILEQLED…NNREKPPVRP (257 aa)). The carboxyltransferase stretch occupies residues 1–504 (MKDILEQLED…NKSVQMPWKK (504 aa)). In terms of domain architecture, CoA carboxyltransferase C-terminal spans 261 to 504 (DPDRIEPSLD…NKSVQMPWKK (244 aa)). The tract at residues 292–325 (DEGDFYEIQEEFAKNIITGFIRLEGRTVGVVANQ) is acyl-CoA binding.

The protein belongs to the AccD/PCCB family. The holoenzyme is a dodecamer composed of 6 PccA/alpha subunits and 6 PccB/beta subunits.

It carries out the reaction propanoyl-CoA + hydrogencarbonate + ATP = (S)-methylmalonyl-CoA + ADP + phosphate + H(+). It functions in the pathway metabolic intermediate metabolism; propanoyl-CoA degradation; succinyl-CoA from propanoyl-CoA: step 1/3. This is one of the 2 subunits of the biotin-dependent propionyl-CoA carboxylase (PCC), the enzyme catalyzing the carboxylation of propionyl-CoA/propanoyl-CoA to D-methylmalonyl-CoA/(S)-methylmalonyl-CoA. Within the holoenzyme, the alpha subunit catalyzes the ATP-dependent carboxylation of the biotin carried by the biotin carboxyl carrier (BCC) domain, while the beta subunit then tranfers the carboxyl group from carboxylated biotin to propionyl-CoA. The sequence is that of Propionyl-CoA carboxylase beta chain from Roseobacter denitrificans (strain ATCC 33942 / OCh 114) (Erythrobacter sp. (strain OCh 114)).